We begin with the raw amino-acid sequence, 870 residues long: Protein csx2 (870 aa).

Residues 212-251 (TSPEISDAPPLSGNVDPLPINSPPLTNPVARDIDQTEPED) are disordered. One can recognise a PH domain in the interval 510-614 (TSAKQGLLLA…WIEAIQYSIS (105 aa)). Serine 625, serine 653, and serine 655 each carry phosphoserine. The interval 647–672 (RVASVTSPSRHNSDSKEKKQTKSPSL) is disordered. Over residues 657–666 (HNSDSKEKKQ) the composition is skewed to basic and acidic residues. In terms of domain architecture, Arf-GAP spans 670 to 791 (PSLVKTLKEM…RFIKSSFSHD (122 aa)). The C4-type zinc finger occupies 686–710 (CADCNTTARVEWCAINFPVVLCIDC).

In Schizosaccharomyces pombe (strain 972 / ATCC 24843) (Fission yeast), this protein is Protein csx2 (csx2).